The chain runs to 430 residues: Serine--tRNA ligase (430 aa).

236–238 (TAE) provides a ligand contact to L-serine. Residue 267–269 (RRE) participates in ATP binding. Glutamate 290 lines the L-serine pocket. An ATP-binding site is contributed by 354–357 (EISS). Serine 390 serves as a coordination point for L-serine.

This sequence belongs to the class-II aminoacyl-tRNA synthetase family. Type-1 seryl-tRNA synthetase subfamily. Homodimer. The tRNA molecule binds across the dimer.

It is found in the cytoplasm. It catalyses the reaction tRNA(Ser) + L-serine + ATP = L-seryl-tRNA(Ser) + AMP + diphosphate + H(+). The enzyme catalyses tRNA(Sec) + L-serine + ATP = L-seryl-tRNA(Sec) + AMP + diphosphate + H(+). It functions in the pathway aminoacyl-tRNA biosynthesis; selenocysteinyl-tRNA(Sec) biosynthesis; L-seryl-tRNA(Sec) from L-serine and tRNA(Sec): step 1/1. Functionally, catalyzes the attachment of serine to tRNA(Ser). Is also able to aminoacylate tRNA(Sec) with serine, to form the misacylated tRNA L-seryl-tRNA(Sec), which will be further converted into selenocysteinyl-tRNA(Sec). This chain is Serine--tRNA ligase, found in Gloeothece citriformis (strain PCC 7424) (Cyanothece sp. (strain PCC 7424)).